A 358-amino-acid polypeptide reads, in one-letter code: Alpha-2-HS-glycoprotein (358 aa).

Residues methionine 1–serine 18 form the signal peptide. The 107-residue stretch at glutamate 27–glutamate 133 folds into the Cystatin fetuin-A-type 1 domain. 6 disulfides stabilise this stretch: cysteine 32/cysteine 349, cysteine 89/cysteine 100, cysteine 114/cysteine 132, cysteine 146/cysteine 149, cysteine 208/cysteine 218, and cysteine 229/cysteine 246. Residue asparagine 99 is glycosylated (N-linked (GlcNAc...) asparagine). Position 134 is a phosphoserine (serine 134). Threonine 135 is modified (phosphothreonine). Phosphoserine is present on serine 138. In terms of domain architecture, Cystatin fetuin-A-type 2 spans lysine 144 to valine 254. N-linked (GlcNAc...) asparagine glycans are attached at residues asparagine 156 and asparagine 176. A disordered region spans residues leucine 257–serine 288. The segment covering asparagine 267–proline 282 has biased composition (pro residues). Phosphoserine is present on residues serine 318 and serine 320. The disordered stretch occupies residues serine 320–proline 350.

This sequence belongs to the fetuin family. In terms of processing, phosphorylated by FAM20C in the extracellular medium. As to expression, bone marrow.

The protein localises to the secreted. The chain is Alpha-2-HS-glycoprotein (AHSG) from Cavia porcellus (Guinea pig).